The primary structure comprises 227 residues: Protein FdhD (227 aa).

Residue 210 to 215 (FARNGK) coordinates Mo-bis(molybdopterin guanine dinucleotide).

This sequence belongs to the FdhD family.

It is found in the cytoplasm. Required for formate dehydrogenase (FDH) activity. The chain is Protein FdhD from Methanocaldococcus jannaschii (strain ATCC 43067 / DSM 2661 / JAL-1 / JCM 10045 / NBRC 100440) (Methanococcus jannaschii).